Here is a 340-residue protein sequence, read N- to C-terminus: Melanin-concentrating hormone receptor 2 (340 aa).

Topologically, residues 1-39 are extracellular; sequence MNPFHASCWNTSAELLNKSWNKEFAYQTASVVDTVILPS. Residues Asn10 and Asn17 are each glycosylated (N-linked (GlcNAc...) asparagine). A helical membrane pass occupies residues 40-60; it reads MIGIICSTGLVGNILIVFTII. Residues 61–69 are Cytoplasmic-facing; sequence RSRKKTVPD. The helical transmembrane segment at 70 to 90 threads the bilayer; the sequence is IYICNLAVADLVHIVGMPFLI. Topologically, residues 91–104 are extracellular; it reads HQWARGGEWVFGGP. Residues 105–129 form a helical membrane-spanning segment; that stretch reads LCTIITSLDTCNQFACSAIMTVMSV. Over 130–154 the chain is Cytoplasmic; that stretch reads DRYFALVQPFRLTRWRTRYKTIRIN. Residues 155-175 form a helical membrane-spanning segment; the sequence is LGLWAASFILALPVWVYSKVI. Residues 176-200 lie on the Extracellular side of the membrane; that stretch reads KFKDGVESCAFDLTSPDDVLWYTLY. A helical membrane pass occupies residues 201–221; it reads LTITTFFFPLPLILVCYILIL. At 222–252 the chain is on the cytoplasmic side; that stretch reads CYTWEMYQQNKDARCCNPSVPKQRVMKLTKM. A helical membrane pass occupies residues 253-273; sequence VLVLVVVFILSAAPYHVIQLV. At 274–288 the chain is on the extracellular side; the sequence is NLQMEQPTLAFYVGY. Residues 289-309 traverse the membrane as a helical segment; it reads YLSICLSYASSSINPFLYILL. The Cytoplasmic segment spans residues 310-340; that stretch reads SGNFQKRLPQIQRRATEKEINNMGNTLKSHF.

It belongs to the G-protein coupled receptor 1 family. Specifically expressed in the brain, with highest levels in cerebral cortex, hippocampus and amygdala. No expression detected in the cerebellum, thalamus or hypothalamus.

The protein resides in the cell membrane. In terms of biological role, receptor for melanin-concentrating hormone, coupled to G proteins that activate phosphoinositide hydrolysis. In Homo sapiens (Human), this protein is Melanin-concentrating hormone receptor 2 (MCHR2).